Reading from the N-terminus, the 332-residue chain is MPNTHDTKNNVSPSEYAKFDPSTIHQRLNTSLSRPQLNSDGSIRHFLGVEGLNKAQLQAIIAKALFFEPSTRTRTTFEVAEKRLGANVLNLDIASSSAKKGESLRDTLWNLQAMTADIFVVRHSASGAAHFMATEVTPDIAIINGGDGWHAHPTQGMLDMLTIHREAPRPFEELSVAIIGDVKHSRVARSDISALQTLGVKDIRVIAPRTLLPKGIERFGVQVYEDMNSCVRDCDVIMGLRIQNERIGSPLLASSSEYYKQYGITPERVALAKPDALIMHPGPMNRGVEIASSVADGPQSVILKQVSNGVAIRMAVLALTMEGQRAHQANRG.

Residues 1–20 (MPNTHDTKNNVSPSEYAKFD) are disordered. Arg72 and Thr73 together coordinate carbamoyl phosphate. Residue Lys100 coordinates L-aspartate. Carbamoyl phosphate-binding residues include Arg122, His152, and Gln155. Residues Arg186 and Arg241 each contribute to the L-aspartate site. Residues Gly282 and Pro283 each coordinate carbamoyl phosphate.

Belongs to the aspartate/ornithine carbamoyltransferase superfamily. ATCase family. Heterododecamer (2C3:3R2) of six catalytic PyrB chains organized as two trimers (C3), and six regulatory PyrI chains organized as three dimers (R2).

It catalyses the reaction carbamoyl phosphate + L-aspartate = N-carbamoyl-L-aspartate + phosphate + H(+). It functions in the pathway pyrimidine metabolism; UMP biosynthesis via de novo pathway; (S)-dihydroorotate from bicarbonate: step 2/3. In terms of biological role, catalyzes the condensation of carbamoyl phosphate and aspartate to form carbamoyl aspartate and inorganic phosphate, the committed step in the de novo pyrimidine nucleotide biosynthesis pathway. This chain is Aspartate carbamoyltransferase catalytic subunit, found in Psychrobacter sp. (strain TAD1).